The following is a 38-amino-acid chain: Augerpeptide hhe53 (38 aa).

In terms of processing, contains 2 disulfide bonds. In terms of tissue distribution, expressed by the venom duct.

The protein localises to the secreted. The sequence is that of Augerpeptide hhe53 from Hastula hectica (Sea snail).